Reading from the N-terminus, the 253-residue chain is HTH-type transcriptional repressor DasR (253 aa).

In terms of domain architecture, HTH gntR-type spans 16-86 (RAQRVPKYYR…QGKGTFVAKP (71 aa)). A DNA-binding region (H-T-H motif) is located at residues 46-65 (ERTLAAEFDTSRTTVPQALQ).

The protein localises to the cytoplasm. Its function is as follows. Global regulator that is part of the nutrient-sensing system. In the absence of glucosamine 6-P (GlcN6P), represses the phosphotransferase system (PTS) specific for the uptake of N-acetylglucosamine (PTSNag), and genes involved in the metabolism of chitin, as well as several genes involved in development, thereby linking carbon availability to morphogenesis. Regulates the dasABC transport operon involved in glucose-related morphogenesis. Essential for development. This Streptomyces griseus protein is HTH-type transcriptional repressor DasR (dasR).